The sequence spans 137 residues: 3-hydroxyacyl-[acyl-carrier-protein] dehydratase FabZ (137 aa).

Histidine 46 is an active-site residue.

Belongs to the thioester dehydratase family. FabZ subfamily.

It localises to the cytoplasm. The enzyme catalyses a (3R)-hydroxyacyl-[ACP] = a (2E)-enoyl-[ACP] + H2O. In terms of biological role, involved in unsaturated fatty acids biosynthesis. Catalyzes the dehydration of short chain beta-hydroxyacyl-ACPs and long chain saturated and unsaturated beta-hydroxyacyl-ACPs. This is 3-hydroxyacyl-[acyl-carrier-protein] dehydratase FabZ from Thermotoga maritima (strain ATCC 43589 / DSM 3109 / JCM 10099 / NBRC 100826 / MSB8).